A 566-amino-acid polypeptide reads, in one-letter code: O-fucosyltransferase 36 (566 aa).

The span at 1–14 (MERNSSDDEEDHQH) shows a compositional bias: basic and acidic residues. The tract at residues 1–37 (MERNSSDDEEDHQHLIPQNDTRIRHREDSVSSNATTI) is disordered. Residues 66 to 86 (YVIVFVSLIISIGLLFLLTDP) form a helical; Signal-anchor for type II membrane protein membrane-spanning segment. N-linked (GlcNAc...) asparagine glycosylation is found at Asn93, Asn129, Asn138, Asn179, and Asn190. Residues 415–417 (HFR) and 531–532 (TF) contribute to the substrate site.

It belongs to the glycosyltransferase GT106 family.

It is found in the membrane. It functions in the pathway glycan metabolism. The polypeptide is O-fucosyltransferase 36 (Arabidopsis thaliana (Mouse-ear cress)).